The following is a 428-amino-acid chain: Histidine--tRNA ligase (428 aa).

It belongs to the class-II aminoacyl-tRNA synthetase family. As to quaternary structure, homodimer.

The protein localises to the cytoplasm. The enzyme catalyses tRNA(His) + L-histidine + ATP = L-histidyl-tRNA(His) + AMP + diphosphate + H(+). The chain is Histidine--tRNA ligase from Staphylococcus carnosus (strain TM300).